Here is a 90-residue protein sequence, read N- to C-terminus: MKKVLVKAVHGYQRWISPVFPPACRYYPTCSNYMIQAIEKHGPAKGLAMGTARILRCHPFCQPGYDLVPKHFSLRRNWAEPEKKEEEDSK.

Belongs to the UPF0161 family.

The protein localises to the cell membrane. In terms of biological role, could be involved in insertion of integral membrane proteins into the membrane. The chain is Putative membrane protein insertion efficiency factor from Lactococcus lactis subsp. cremoris (strain SK11).